The following is a 254-amino-acid chain: 3-dehydroquinate dehydratase (254 aa).

3-dehydroquinate-binding positions include 47–49 (EFR) and arginine 83. Catalysis depends on histidine 144, which acts as the Proton donor/acceptor. The active-site Schiff-base intermediate with substrate is lysine 171. Positions 213, 232, and 236 each coordinate 3-dehydroquinate.

This sequence belongs to the type-I 3-dehydroquinase family. Homodimer.

The catalysed reaction is 3-dehydroquinate = 3-dehydroshikimate + H2O. Its pathway is metabolic intermediate biosynthesis; chorismate biosynthesis; chorismate from D-erythrose 4-phosphate and phosphoenolpyruvate: step 3/7. In terms of biological role, involved in the third step of the chorismate pathway, which leads to the biosynthesis of aromatic amino acids. Catalyzes the cis-dehydration of 3-dehydroquinate (DHQ) and introduces the first double bond of the aromatic ring to yield 3-dehydroshikimate. The chain is 3-dehydroquinate dehydratase from Neisseria meningitidis serogroup C / serotype 2a (strain ATCC 700532 / DSM 15464 / FAM18).